A 204-amino-acid chain; its full sequence is Cytochrome c biogenesis ATP-binding export protein CcmA (204 aa).

Residues 2–204 (IEVRDLGVSR…LDAEDLGGFL (203 aa)) enclose the ABC transporter domain. 34-41 (GPNGIGKT) lines the ATP pocket.

It belongs to the ABC transporter superfamily. CcmA exporter (TC 3.A.1.107) family. In terms of assembly, the complex is composed of two ATP-binding proteins (CcmA) and two transmembrane proteins (CcmB).

The protein localises to the cell inner membrane. It catalyses the reaction heme b(in) + ATP + H2O = heme b(out) + ADP + phosphate + H(+). Functionally, part of the ABC transporter complex CcmAB involved in the biogenesis of c-type cytochromes; once thought to export heme, this seems not to be the case, but its exact role is uncertain. Responsible for energy coupling to the transport system. This is Cytochrome c biogenesis ATP-binding export protein CcmA from Ruegeria sp. (strain TM1040) (Silicibacter sp.).